The primary structure comprises 276 residues: NH(3)-dependent NAD(+) synthetase (276 aa).

43–50 (GISGGVDS) contacts ATP. Asp49 is a Mg(2+) binding site. Residue Arg146 participates in deamido-NAD(+) binding. Thr166 lines the ATP pocket. Glu171 lines the Mg(2+) pocket. Deamido-NAD(+) is bound by residues Lys179 and Asp186. ATP is bound by residues Lys195 and Thr217. Position 266 to 267 (266 to 267 (HK)) interacts with deamido-NAD(+).

This sequence belongs to the NAD synthetase family. Homodimer.

The catalysed reaction is deamido-NAD(+) + NH4(+) + ATP = AMP + diphosphate + NAD(+) + H(+). It participates in cofactor biosynthesis; NAD(+) biosynthesis; NAD(+) from deamido-NAD(+) (ammonia route): step 1/1. In terms of biological role, catalyzes the ATP-dependent amidation of deamido-NAD to form NAD. Uses ammonia as a nitrogen source. The chain is NH(3)-dependent NAD(+) synthetase from Vibrio cholerae serotype O1 (strain ATCC 39541 / Classical Ogawa 395 / O395).